A 133-amino-acid chain; its full sequence is MSTIRVNVVTPDGKVYDGDVDMVVVRTVEGELGILPKHIPLVAPLTVGAVRLKKGNSEEQVAVSGGFVEVRPDQVTILAEAAELPSAIDVDRARAAKERAESRLNSTKQDAVDFKRAELALKRAINRLDVTGK.

It belongs to the ATPase epsilon chain family. In terms of assembly, F-type ATPases have 2 components, CF(1) - the catalytic core - and CF(0) - the membrane proton channel. CF(1) has five subunits: alpha(3), beta(3), gamma(1), delta(1), epsilon(1). CF(0) has three main subunits: a, b and c.

It is found in the cell membrane. Functionally, produces ATP from ADP in the presence of a proton gradient across the membrane. The polypeptide is ATP synthase epsilon chain (atpC) (Alkalihalophilus pseudofirmus (strain ATCC BAA-2126 / JCM 17055 / OF4) (Bacillus pseudofirmus)).